The chain runs to 232 residues: UPF0177 protein in abiGi 5'region (232 aa).

6 helical membrane-spanning segments follow: residues 12-32 (YLSLFFLLFAIYWFPDVILAY), 47-67 (VVATWIFLGNMSISLFLGILI), 86-106 (LLFLLITTIILFVIYFFSYTY), 124-144 (SIQIVFPFVQFITIAICAPIF), 165-185 (IVSCVGFAWMHTGPNPILIVY), and 206-226 (ILVHGVFNALLPIVIPLLQVI).

It belongs to the UPF0177 family.

It localises to the cell membrane. The function of this protein is currently unknown, but it has been shown that it is not necessary for phage resistance. In Lactococcus lactis subsp. cremoris (Streptococcus cremoris), this protein is UPF0177 protein in abiGi 5'region.